Reading from the N-terminus, the 439-residue chain is Agnestins biosynthesis cluster transcriptional coactivator AgnL9 (439 aa).

One can recognise an HTH iclR-type domain in the interval 79-149; sequence MTIQTQLLAC…EPGHITHSAL (71 aa). The segment at residues 109–128 is a DNA-binding region (H-T-H motif); the sequence is MKDVSELIDVPENQLGRIVR.

It localises to the nucleus. Transcriptional coactivator; part of the gene cluster that mediates the biosynthesis of agnestins, dihydroxy-xanthone metabolites. In Paecilomyces divaricatus (Penicillium divaricatum), this protein is Agnestins biosynthesis cluster transcriptional coactivator AgnL9.